The primary structure comprises 85 residues: Putative membrane protein insertion efficiency factor (85 aa).

The protein belongs to the UPF0161 family.

It is found in the cell inner membrane. Its function is as follows. Could be involved in insertion of integral membrane proteins into the membrane. This is Putative membrane protein insertion efficiency factor from Shewanella sediminis (strain HAW-EB3).